A 109-amino-acid polypeptide reads, in one-letter code: EPIDERMAL PATTERNING FACTOR-like protein 4 (109 aa).

An N-terminal signal peptide occupies residues 1 to 26 (MGTFRRRRRFLLAALVTFALLHLFSA). Cystine bridges form between Cys66–Cys100, Cys70–Cys76, and Cys73–Cys102.

The protein belongs to the plant cysteine rich small secretory peptide family. Epidermal patterning factor subfamily. In terms of assembly, interacts with ERECTA. As to expression, expressed at the base of the apical meristem at 3 days after germination. Not detected in the hypocotyl. Expressed in developing stems soon after bolting, in inflorescence stems and in young siliques.

It is found in the secreted. In terms of biological role, acts primarily as positive regulator of inflorescence growth. Endodermal expression is sufficient for proper inflorescence architecture. Redundantly involved with EPFL6 in procambial development regulation. Controls stomatal patterning. Mediates stomatal development inhibition. TMM (AC Q9SSD1) functions to dampen or block CLL2 signaling. Acts as a growth-regulatory ligand for ERECTA family receptors. The protein is EPIDERMAL PATTERNING FACTOR-like protein 4 of Arabidopsis thaliana (Mouse-ear cress).